Reading from the N-terminus, the 531-residue chain is Non-muscle caldesmon (531 aa).

Positions 20–200 (AYQRNDDDEE…LKGGNLGENQ (181 aa)) are myosin and calmodulin-binding. The disordered stretch occupies residues 21-379 (YQRNDDDEEE…KKPFKCFTPK (359 aa)). Basic and acidic residues predominate over residues 41–50 (QERLRQKQEE). Residues 54–68 (GQVTDQVEAHVQNSA) are compositionally biased toward polar residues. Over residues 93–116 (RLARREERRQKRLQEALERQKEFD) the composition is skewed to basic and acidic residues. A compositionally biased stretch (polar residues) spans 120–133 (TDGSLSVPSRRMQN). Ser123 carries the post-translational modification Phosphoserine. The segment covering 143–156 (GEEKGESRSGRYEM) has biased composition (basic and acidic residues). Positions 162-172 (VITSYQKNSYQ) are enriched in polar residues. Basic and acidic residues predominate over residues 200-227 (QIKDEKIKKDKEPKEEVKNFLDRKKGFT). A Phosphoserine; by CDK1 modification is found at Ser249. 2 stretches are compositionally biased toward basic and acidic residues: residues 271–297 (AGKRLEELRRRRGETESEEFEKLKQKQ) and 305–372 (EELK…DKKP). The tract at residues 303–360 (ELEELKKKREERRKVLEEEEQRRKQEEADRKAREEEEKRRLKEEIERRRAEAAEKRQK) is tropomyosin-binding. The residue at position 382 (Ser382) is a Phosphoserine. Residue Lys384 forms a Glycyl lysine isopeptide (Lys-Gly) (interchain with G-Cter in SUMO2) linkage. The tract at residues 392–424 (LNKSVQKSGVKSTHQAAVVSKIDSRLEQYTNAI) is strong actin-binding. Ser395 carries the phosphoserine modification. The tract at residues 402–412 (KSTHQAAVVSK) is tropomyosin-binding. Residues 454 to 460 (WEKGSVF) are calmodulin-binding. The disordered stretch occupies residues 458-531 (SVFSSPSASG…VDKVTSPTKV (74 aa)). Over residues 459-471 (VFSSPSASGTPNK) the composition is skewed to polar residues. Phosphoserine; by CDK1 is present on Ser462. Thr468 carries the post-translational modification Phosphothreonine; by CDK1. Ser491 and Ser497 each carry phosphoserine; by CDK1. The segment covering 503–522 (SDLRPGDVSGKRNLWEKQSV) has biased composition (basic and acidic residues). The interval 506–531 (RPGDVSGKRNLWEKQSVDKVTSPTKV) is weak actin-binding. Ser527 carries the post-translational modification Phosphoserine; by CDK1.

Belongs to the caldesmon family. In terms of processing, in non-muscle cells, phosphorylation by CDK1 during mitosis causes caldesmon to dissociate from microfilaments. Phosphorylation reduces caldesmon binding to actin, myosin, and calmodulin as well as its inhibition of actomyosin ATPase activity. Phosphorylation also occurs in both quiescent and dividing smooth muscle cells with similar effects on the interaction with actin and calmodulin and on microfilaments reorganization. CDK1-mediated phosphorylation promotes Schwann cell migration during peripheral nerve regeneration. As to expression, high-molecular-weight caldesmon (h-caldesmon) is predominantly expressed in smooth muscles, whereas low-molecular-weight caldesmon (l-caldesmon) is widely distributed in non-muscle tissues and cells. Not expressed in skeletal muscle or heart.

It localises to the cytoplasm. It is found in the cytoskeleton. Its subcellular location is the myofibril. The protein localises to the stress fiber. Its function is as follows. Actin- and myosin-binding protein implicated in the regulation of actomyosin interactions in smooth muscle and nonmuscle cells (could act as a bridge between myosin and actin filaments). Stimulates actin binding of tropomyosin which increases the stabilization of actin filament structure. In muscle tissues, inhibits the actomyosin ATPase by binding to F-actin. This inhibition is attenuated by calcium-calmodulin and is potentiated by tropomyosin. Interacts with actin, myosin, two molecules of tropomyosin and with calmodulin. Also plays an essential role during cellular mitosis and receptor capping. Involved in Schwann cell migration during peripheral nerve regeneration. This chain is Non-muscle caldesmon (Cald1), found in Rattus norvegicus (Rat).